The primary structure comprises 235 residues: Large ribosomal subunit protein uL1 (235 aa).

Belongs to the universal ribosomal protein uL1 family. Part of the 50S ribosomal subunit.

In terms of biological role, binds directly to 23S rRNA. The L1 stalk is quite mobile in the ribosome, and is involved in E site tRNA release. Functionally, protein L1 is also a translational repressor protein, it controls the translation of the L11 operon by binding to its mRNA. The protein is Large ribosomal subunit protein uL1 of Methylobacterium nodulans (strain LMG 21967 / CNCM I-2342 / ORS 2060).